We begin with the raw amino-acid sequence, 188 residues long: Ribosome-recycling factor (188 aa).

It belongs to the RRF family.

It localises to the cytoplasm. Functionally, responsible for the release of ribosomes from messenger RNA at the termination of protein biosynthesis. May increase the efficiency of translation by recycling ribosomes from one round of translation to another. In Cereibacter sphaeroides (strain ATCC 17023 / DSM 158 / JCM 6121 / CCUG 31486 / LMG 2827 / NBRC 12203 / NCIMB 8253 / ATH 2.4.1.) (Rhodobacter sphaeroides), this protein is Ribosome-recycling factor.